Consider the following 379-residue polypeptide: Endonuclease III homolog 1, chloroplastic (379 aa).

The N-terminal 54 residues, 1–54 (MILLVNGGAATSIHPNAARFYRIGTMSRQIHGAVSSSKHISLKTQHPLSDSNSE), are a transit peptide targeting the chloroplast. Residues 244–272 (KYDGDIPSSLDDLLSLPGIGPKMAHLILH) form the HhH domain. The active-site Nucleophile; for N-glycosylase activity is K265. Residues C340, C347, C350, and C356 each contribute to the [4Fe-4S] cluster site.

Belongs to the Nth/MutY family. Requires [4Fe-4S] cluster as cofactor. Expressed at low levels in roots, stems, leaves and flowers.

Its subcellular location is the plastid. The protein resides in the chloroplast stroma. The protein localises to the chloroplast nucleoid. The enzyme catalyses 2'-deoxyribonucleotide-(2'-deoxyribose 5'-phosphate)-2'-deoxyribonucleotide-DNA = a 3'-end 2'-deoxyribonucleotide-(2,3-dehydro-2,3-deoxyribose 5'-phosphate)-DNA + a 5'-end 5'-phospho-2'-deoxyribonucleoside-DNA + H(+). Its function is as follows. Bifunctional DNA N-glycosylase with associated apurinic/apyrimidinic (AP) lyase function that catalyzes the first step in base excision repair (BER), the primary repair pathway for the repair of oxidative DNA damage. The DNA N-glycosylase activity releases the damaged DNA base from DNA by cleaving the N-glycosidic bond, leaving an AP site. The AP lyase activity cleaves the phosphodiester bond 3' to the AP site by a beta-elimination. Primarily recognizes and repairs oxidative base damage of pyrimidines. This chain is Endonuclease III homolog 1, chloroplastic, found in Arabidopsis thaliana (Mouse-ear cress).